We begin with the raw amino-acid sequence, 150 residues long: Leukotriene C4 synthase (150 aa).

Topologically, residues 1–6 (MKEETA) are cytoplasmic. Residues 7–27 (LLATVTLLGVLLQAYFSLQVI) form a helical membrane-spanning segment. The Lumenal portion of the chain corresponds to 28-48 (SARRTFHVSPPLTSGPPEFER). Residue Arg-30 participates in glutathione binding. The Proton donor role is filled by Arg-31. At Ser-36 the chain carries Phosphoserine. A helical membrane pass occupies residues 49 to 69 (VFRAQVNCSEYFPLFLATLWV). Glutathione-binding positions include 51-55 (RAQVN) and 58-59 (EY). Residues 70–73 (AGIF) lie on the Cytoplasmic side of the membrane. Residues 74–94 (FHEGAAALCGLFYLFARLRYF) form a helical membrane-spanning segment. 93-97 (YFQGY) provides a ligand contact to glutathione. At 95–104 (QGYARSAQHR) the chain is on the lumenal side. Arg-104 functions as the Proton acceptor in the catalytic mechanism. Residues 105-124 (LDPLYASARALWLLVAMAAL) form a helical membrane-spanning segment. Residues 125 to 150 (GLLVHFLPGTLRAALFRWLQVLLPMA) lie on the Cytoplasmic side of the membrane.

It belongs to the MAPEG family. Homotrimer. Interacts with ALOX5AP and ALOX5. Post-translationally, phosphorylation at Ser-36 by RPS6KB1 inhibits the leukotriene-C4 synthase activity.

It localises to the nucleus outer membrane. The protein resides in the endoplasmic reticulum membrane. It is found in the nucleus membrane. It catalyses the reaction leukotriene C4 = leukotriene A4 + glutathione. The catalysed reaction is (13S,14S)-epoxy-(4Z,7Z,9E,11E,16Z,19Z)-docosahexaenoate + glutathione = (13R)-S-glutathionyl-(14S)-hydroxy-(4Z,7Z,9E,11E,16Z,19Z)-docosahexaenoate. It participates in lipid metabolism; leukotriene C4 biosynthesis. Its activity is regulated as follows. Inhibited by MK886. Its function is as follows. Catalyzes the conjugation of leukotriene A4 with reduced glutathione (GSH) to form leukotriene C4 with high specificity. Can also catalyze the transfer of a glutathionyl group from glutathione (GSH) to 13(S),14(S)-epoxy-docosahexaenoic acid to form maresin conjugate in tissue regeneration 1 (MCTR1), a bioactive lipid mediator that possess potent anti-inflammatory and proresolving actions. This chain is Leukotriene C4 synthase (Ltc4s), found in Rattus norvegicus (Rat).